Consider the following 131-residue polypeptide: Small ribosomal subunit protein uS8 (131 aa).

This sequence belongs to the universal ribosomal protein uS8 family. Part of the 30S ribosomal subunit. Contacts proteins S5 and S12.

One of the primary rRNA binding proteins, it binds directly to 16S rRNA central domain where it helps coordinate assembly of the platform of the 30S subunit. This is Small ribosomal subunit protein uS8 from Nitrosospira multiformis (strain ATCC 25196 / NCIMB 11849 / C 71).